Reading from the N-terminus, the 564-residue chain is NAD-dependent malic enzyme (564 aa).

Tyr-104 (proton donor) is an active-site residue. Position 157 (Arg-157) interacts with NAD(+). Residue Lys-175 is the Proton acceptor of the active site. Glu-246, Asp-247, and Asp-270 together coordinate a divalent metal cation. Asp-270 and Asn-417 together coordinate NAD(+).

It belongs to the malic enzymes family. In terms of assembly, homotetramer. It depends on Mg(2+) as a cofactor. The cofactor is Mn(2+).

The enzyme catalyses (S)-malate + NAD(+) = pyruvate + CO2 + NADH. The catalysed reaction is oxaloacetate + H(+) = pyruvate + CO2. This Aeromonas salmonicida (strain A449) protein is NAD-dependent malic enzyme.